Here is a 133-residue protein sequence, read N- to C-terminus: Small ribosomal subunit protein eS17 (133 aa).

This sequence belongs to the eukaryotic ribosomal protein eS17 family.

The polypeptide is Small ribosomal subunit protein eS17 (RpS17) (Spodoptera frugiperda (Fall armyworm)).